We begin with the raw amino-acid sequence, 147 residues long: Large ribosomal subunit protein uL13 (147 aa).

The protein belongs to the universal ribosomal protein uL13 family. Part of the 50S ribosomal subunit.

Its function is as follows. This protein is one of the early assembly proteins of the 50S ribosomal subunit, although it is not seen to bind rRNA by itself. It is important during the early stages of 50S assembly. In Corynebacterium diphtheriae (strain ATCC 700971 / NCTC 13129 / Biotype gravis), this protein is Large ribosomal subunit protein uL13.